Consider the following 357-residue polypeptide: MQKRIAVIYGDGIGKEVITQALKILKAVAKKYEHTFIFEEVLAGGAAIDECGECLPMKSLQICKQSDSVLLGAVGGPKWDNEPSHNRPEKALLTLRKELGLFANIRPATLLPQLSKASPLKDEILNRGIDFIIVRELIGGVYFGEHKLEEINGEKVASDAMTYSASQIESIAKVAFNIARNRKKEIVCVDKANVLSSSRLWREVVDKVAQNYKDVHLSYMYVDNAAMQICRAPSQFDVILTENMFGDILSDEASIITGTIGVIPSASLSNGTLGMYEPIHGSAPDIAGQDKANPIGTILSAAMMLELSFGLTKESEVIQKAVQNALDKGYRTGDMMSEGMQLVGCEQMGDVILESVI.

NAD(+) is bound at residue 76–89 (GPKWDNEPSHNRPE). 4 residues coordinate substrate: R96, R106, R135, and D223. 3 residues coordinate Mg(2+): D223, D247, and D251. NAD(+) is bound at residue 281–293 (GSAPDIAGQDKAN).

This sequence belongs to the isocitrate and isopropylmalate dehydrogenases family. LeuB type 1 subfamily. Homodimer. The cofactor is Mg(2+). Mn(2+) is required as a cofactor.

The protein resides in the cytoplasm. The enzyme catalyses (2R,3S)-3-isopropylmalate + NAD(+) = 4-methyl-2-oxopentanoate + CO2 + NADH. The protein operates within amino-acid biosynthesis; L-leucine biosynthesis; L-leucine from 3-methyl-2-oxobutanoate: step 3/4. Its function is as follows. Catalyzes the oxidation of 3-carboxy-2-hydroxy-4-methylpentanoate (3-isopropylmalate) to 3-carboxy-4-methyl-2-oxopentanoate. The product decarboxylates to 4-methyl-2 oxopentanoate. This chain is 3-isopropylmalate dehydrogenase, found in Helicobacter hepaticus (strain ATCC 51449 / 3B1).